Reading from the N-terminus, the 235-residue chain is Segregation and condensation protein A (235 aa).

Belongs to the ScpA family. As to quaternary structure, component of a cohesin-like complex composed of ScpA, ScpB and the Smc homodimer, in which ScpA and ScpB bind to the head domain of Smc. The presence of the three proteins is required for the association of the complex with DNA.

It is found in the cytoplasm. Its function is as follows. Participates in chromosomal partition during cell division. May act via the formation of a condensin-like complex containing Smc and ScpB that pull DNA away from mid-cell into both cell halves. This is Segregation and condensation protein A from Streptococcus equi subsp. equi (strain 4047).